A 249-amino-acid polypeptide reads, in one-letter code: Protection of telomeres protein poz1 (249 aa).

In terms of assembly, interacts with pot1, rap1 and tpz1.

The protein resides in the cytoplasm. Its subcellular location is the nucleus. The protein localises to the chromosome. It localises to the telomere. In terms of biological role, telomeric DNA-binding protein that negatively regulates telomerase and telomere length. This is Protection of telomeres protein poz1 (poz1) from Schizosaccharomyces pombe (strain 972 / ATCC 24843) (Fission yeast).